Reading from the N-terminus, the 222-residue chain is Cytidylate kinase (222 aa).

G9–T17 serves as a coordination point for ATP.

Belongs to the cytidylate kinase family. Type 1 subfamily.

The protein localises to the cytoplasm. The enzyme catalyses CMP + ATP = CDP + ADP. It catalyses the reaction dCMP + ATP = dCDP + ADP. This is Cytidylate kinase from Thermodesulfovibrio yellowstonii (strain ATCC 51303 / DSM 11347 / YP87).